The primary structure comprises 143 residues: Cell division protein SepF (143 aa).

Belongs to the SepF family. As to quaternary structure, homodimer. Interacts with FtsZ.

The protein resides in the cytoplasm. Its function is as follows. Cell division protein that is part of the divisome complex and is recruited early to the Z-ring. Probably stimulates Z-ring formation, perhaps through the cross-linking of FtsZ protofilaments. Its function overlaps with FtsA. In Geobacillus thermodenitrificans (strain NG80-2), this protein is Cell division protein SepF.